The following is a 103-amino-acid chain: ATP synthase F(0) complex subunit g, mitochondrial (103 aa).

The residue at position 2 (Ala-2) is an N-acetylalanine. Lys-11, Lys-24, Lys-35, and Lys-54 each carry N6-acetyllysine.

This sequence belongs to the ATPase g subunit family. In terms of assembly, component of the ATP synthase complex composed at least of ATP5F1A/subunit alpha, ATP5F1B/subunit beta, ATP5MC1/subunit c (homooctomer), MT-ATP6/subunit a, MT-ATP8/subunit 8, ATP5ME/subunit e, ATP5MF/subunit f, ATP5MG/subunit g, ATP5MK/subunit k, ATP5MJ/subunit j, ATP5F1C/subunit gamma, ATP5F1D/subunit delta, ATP5F1E/subunit epsilon, ATP5PF/subunit F6, ATP5PB/subunit b, ATP5PD/subunit d, ATP5PO/subunit OSCP. ATP synthase complex consists of a soluble F(1) head domain (subunits alpha(3) and beta(3)) - the catalytic core - and a membrane F(0) domain - the membrane proton channel (subunits c, a, 8, e, f, g, k and j). These two domains are linked by a central stalk (subunits gamma, delta, and epsilon) rotating inside the F1 region and a stationary peripheral stalk (subunits F6, b, d, and OSCP).

The protein localises to the mitochondrion. The protein resides in the mitochondrion inner membrane. Subunit g, of the mitochondrial membrane ATP synthase complex (F(1)F(0) ATP synthase or Complex V) that produces ATP from ADP in the presence of a proton gradient across the membrane which is generated by electron transport complexes of the respiratory chain. ATP synthase complex consist of a soluble F(1) head domain - the catalytic core - and a membrane F(1) domain - the membrane proton channel. These two domains are linked by a central stalk rotating inside the F(1) region and a stationary peripheral stalk. During catalysis, ATP synthesis in the catalytic domain of F(1) is coupled via a rotary mechanism of the central stalk subunits to proton translocation. In vivo, can only synthesize ATP although its ATP hydrolase activity can be activated artificially in vitro. Part of the complex F(0) domain. The protein is ATP synthase F(0) complex subunit g, mitochondrial of Homo sapiens (Human).